Here is a 640-residue protein sequence, read N- to C-terminus: Glycosyltransferase-like protein gnt14 (640 aa).

The Cytoplasmic portion of the chain corresponds to 1 to 14 (MFGFKTTKNKKRVR). The helical; Signal-anchor for type II membrane protein transmembrane segment at 15–35 (LLVVAIGVMIFFMCLSNFSSI) threads the bilayer. Topologically, residues 36-640 (QSRQSSSTDT…TENCYSNDHW (605 aa)) are extracellular. Disordered stretches follow at residues 63-184 (PSIN…PLSS) and 254-277 (NSNN…NNNY). Low complexity predominate over residues 65-171 (ININNSENNI…NININNNNKP (107 aa)). N-linked (GlcNAc...) asparagine glycosylation is present at Asn68. N-linked (GlcNAc...) asparagine glycosylation is found at Asn410 and Asn539.

Belongs to the glycosyltransferase 8 family. Highly divergent.

Its subcellular location is the membrane. This Dictyostelium discoideum (Social amoeba) protein is Glycosyltransferase-like protein gnt14 (gnt14).